The sequence spans 109 residues: Cell division protein ZapA (109 aa).

Residues 21-99 (PEQQEALNQA…IEQALLEQGK (79 aa)) adopt a coiled-coil conformation.

The protein belongs to the ZapA family. Type 1 subfamily. In terms of assembly, homodimer. Interacts with FtsZ.

It localises to the cytoplasm. Activator of cell division through the inhibition of FtsZ GTPase activity, therefore promoting FtsZ assembly into bundles of protofilaments necessary for the formation of the division Z ring. It is recruited early at mid-cell but it is not essential for cell division. The protein is Cell division protein ZapA of Pectobacterium atrosepticum (strain SCRI 1043 / ATCC BAA-672) (Erwinia carotovora subsp. atroseptica).